Here is a 236-residue protein sequence, read N- to C-terminus: uncharacterized protein (236 aa).

The segment at 217–236 is disordered; that stretch reads GESPDNVVRGEGGFGSTGGH. Residues 226-236 are compositionally biased toward gly residues; the sequence is GEGGFGSTGGH.

This is an uncharacterized protein from Ostreid herpesvirus 1 (isolate France) (OsHV-1).